A 503-amino-acid chain; its full sequence is GMP synthase [glutamine-hydrolyzing] (503 aa).

The Glutamine amidotransferase type-1 domain occupies 1–178; sequence MREANVYSEI…LHRAAGIPAD (178 aa). C60 serves as the catalytic Nucleophile. Active-site residues include H152 and E154. One can recognise a GMPS ATP-PPase domain in the interval 179 to 377; sequence WNSGNVIADQ…LGLPEVIVGR (199 aa). An ATP-binding site is contributed by 206–212; that stretch reads SGGVDSA.

In terms of assembly, homodimer.

It catalyses the reaction XMP + L-glutamine + ATP + H2O = GMP + L-glutamate + AMP + diphosphate + 2 H(+). It functions in the pathway purine metabolism; GMP biosynthesis; GMP from XMP (L-Gln route): step 1/1. Functionally, catalyzes the synthesis of GMP from XMP. This chain is GMP synthase [glutamine-hydrolyzing], found in Leifsonia xyli subsp. xyli (strain CTCB07).